A 260-amino-acid polypeptide reads, in one-letter code: Late transcription factor 1 (260 aa).

It belongs to the chordopoxvirinae VLTF-1 family. In terms of assembly, interacts with the late transcription factors VLTF-2 and VLTF-3. Interacts with the late transcription elongation factor VLTF-4. Interacts with itself.

In terms of biological role, associates with RNA polymerase to initiate transcription from late gene promoters. The sequence is that of Late transcription factor 1 (OPG093) from Homo sapiens (Human).